The chain runs to 222 residues: Eukaryotic translation initiation factor 3 subunit K (222 aa).

In terms of domain architecture, PCI spans 46-208 (YDLEANLAVL…KIKTKNITEK (163 aa)).

Belongs to the eIF-3 subunit K family. As to quaternary structure, component of the eukaryotic translation initiation factor 3 (eIF-3) complex. The eIF-3 complex interacts with pix.

It localises to the cytoplasm. Its function is as follows. Component of the eukaryotic translation initiation factor 3 (eIF-3) complex, which is involved in protein synthesis of a specialized repertoire of mRNAs and, together with other initiation factors, stimulates binding of mRNA and methionyl-tRNAi to the 40S ribosome. The eIF-3 complex specifically targets and initiates translation of a subset of mRNAs involved in cell proliferation. The polypeptide is Eukaryotic translation initiation factor 3 subunit K (Drosophila mojavensis (Fruit fly)).